Here is a 152-residue protein sequence, read N- to C-terminus: MSQLCPCGSAVEYSLCCHPYVSGEKVAPDPEHLMRSRYCAFVMKDADYLIKTWHPSCGAAALRAELMAGFAHTEWLGLTVFEHCWQDADNIGFVSFVARFTEGGKTGAIIERSRFLKENGQWYYIDGTRPQFGRNDPCPCGSGKKFKKCCGQ.

It belongs to the UPF0225 family.

This is UPF0225 protein YchJ from Escherichia coli O7:K1 (strain IAI39 / ExPEC).